The sequence spans 414 residues: Protein RecA (414 aa).

78 to 85 (GPESSGKT) contacts ATP. Residues 361–384 (QEKAVEALKKEEGSKEDALTGNKD) show a composition bias toward basic and acidic residues. The segment at 361–414 (QEKAVEALKKEEGSKEDALTGNKDETDDSAQKNSAASKAKRAEVVGLPADDSLF) is disordered.

This sequence belongs to the RecA family.

The protein localises to the cytoplasm. Its function is as follows. Can catalyze the hydrolysis of ATP in the presence of single-stranded DNA, the ATP-dependent uptake of single-stranded DNA by duplex DNA, and the ATP-dependent hybridization of homologous single-stranded DNAs. It interacts with LexA causing its activation and leading to its autocatalytic cleavage. In Treponema denticola (strain ATCC 35405 / DSM 14222 / CIP 103919 / JCM 8153 / KCTC 15104), this protein is Protein RecA.